A 414-amino-acid chain; its full sequence is Arginine deiminase (414 aa).

Cys-402 acts as the Amidino-cysteine intermediate in catalysis.

It belongs to the arginine deiminase family.

The protein localises to the cytoplasm. It carries out the reaction L-arginine + H2O = L-citrulline + NH4(+). The protein operates within amino-acid degradation; L-arginine degradation via ADI pathway; carbamoyl phosphate from L-arginine: step 1/2. In Oenococcus oeni (strain ATCC BAA-331 / PSU-1), this protein is Arginine deiminase.